The chain runs to 273 residues: 4-hydroxy-tetrahydrodipicolinate reductase (273 aa).

Residues 12–17 and E38 contribute to the NAD(+) site; that span reads GAGGRM. Residue R39 participates in NADP(+) binding. NAD(+)-binding positions include 102-104 and 126-129; these read GTT and AANF. Catalysis depends on H159, which acts as the Proton donor/acceptor. Residue H160 coordinates (S)-2,3,4,5-tetrahydrodipicolinate. K163 serves as the catalytic Proton donor. 169 to 170 serves as a coordination point for (S)-2,3,4,5-tetrahydrodipicolinate; it reads GT.

It belongs to the DapB family. In terms of assembly, homotetramer.

The protein resides in the cytoplasm. The enzyme catalyses (S)-2,3,4,5-tetrahydrodipicolinate + NAD(+) + H2O = (2S,4S)-4-hydroxy-2,3,4,5-tetrahydrodipicolinate + NADH + H(+). The catalysed reaction is (S)-2,3,4,5-tetrahydrodipicolinate + NADP(+) + H2O = (2S,4S)-4-hydroxy-2,3,4,5-tetrahydrodipicolinate + NADPH + H(+). It participates in amino-acid biosynthesis; L-lysine biosynthesis via DAP pathway; (S)-tetrahydrodipicolinate from L-aspartate: step 4/4. Its function is as follows. Catalyzes the conversion of 4-hydroxy-tetrahydrodipicolinate (HTPA) to tetrahydrodipicolinate. The chain is 4-hydroxy-tetrahydrodipicolinate reductase from Shigella sonnei (strain Ss046).